We begin with the raw amino-acid sequence, 378 residues long: Mevalonate kinase (378 aa).

ATP contacts are provided by residues Lys10, Ser138, and 143 to 149 (GSGLGSS). Residues Ser149 and Glu193 each coordinate Mg(2+). Asp204 serves as the catalytic Proton acceptor.

Belongs to the GHMP kinase family. Mevalonate kinase subfamily. Mg(2+) serves as cofactor.

The protein localises to the cytoplasm. It carries out the reaction (R)-mevalonate + ATP = (R)-5-phosphomevalonate + ADP + H(+). Its pathway is isoprenoid biosynthesis; isopentenyl diphosphate biosynthesis via mevalonate pathway; isopentenyl diphosphate from (R)-mevalonate: step 1/3. Its activity is regulated as follows. Its activity is inhibited in vitro by geranyl pyrophosphate (GPP) and farnesyl pyrophosphate (FPP) that bind competitively at the ATP-binding site on the enzyme. Catalyzes the phosphorylation of mevalonate to mevalonate 5-phosphate, a key step in isoprenoid and cholesterol biosynthesis. In Arabidopsis thaliana (Mouse-ear cress), this protein is Mevalonate kinase.